The primary structure comprises 295 residues: Sulfotransferase 1 family member D1 (295 aa).

48 to 53 (KSGTTW) is a binding site for 3'-phosphoadenylyl sulfate. Substrate-binding positions include F81 and 106–108 (KTH). Residue H108 is the Proton acceptor of the active site. 3'-phosphoadenylyl sulfate-binding residues include R130 and S138. F142 is a binding site for substrate. 3'-phosphoadenylyl sulfate-binding positions include Y193, S227, and 257–259 (RKG).

The protein belongs to the sulfotransferase 1 family.

The protein resides in the cytoplasm. Sulfotransferase with broad substrate specificity that utilizes 3'-phospho-5'-adenylyl sulfate (PAPS) as sulfonate donor to catalyze the sulfate conjugation of catecholamines, such as dopamine, prostaglandins, leukotriene E4, drugs and xenobiotic compounds. Has sulfotransferase activity towards p-nitrophenol, 2-naphthylamine and minoxidil (in vitro). Sulfonation increases the water solubility of most compounds, and therefore their renal excretion, but it can also result in bioactivation to form active metabolites. In Rattus norvegicus (Rat), this protein is Sulfotransferase 1 family member D1 (Sult1d1).